We begin with the raw amino-acid sequence, 468 residues long: uncharacterized protein (468 aa).

Helical transmembrane passes span 13 to 33 (LEAF…YALF), 40 to 60 (LMII…HCYL), 76 to 96 (ALLI…GGTI), 112 to 132 (LYVT…TSWG), 141 to 161 (FMGV…AVVA), 194 to 214 (LLYT…VYGL), 237 to 257 (VYHF…GSIT), 260 to 280 (PTIP…ILIQ), 328 to 348 (CFCA…TVII), 354 to 374 (FVHS…TMIG), 414 to 434 (IIEP…TLGV), and 443 to 463 (AILC…GIGI).

Belongs to the NhaC Na(+)/H(+) (TC 2.A.35) antiporter family.

The protein localises to the cell membrane. This is an uncharacterized protein from Haemophilus influenzae (strain ATCC 51907 / DSM 11121 / KW20 / Rd).